Reading from the N-terminus, the 124-residue chain is Large ribosomal subunit protein bL12 (124 aa).

The protein belongs to the bacterial ribosomal protein bL12 family. Homodimer. Part of the ribosomal stalk of the 50S ribosomal subunit. Forms a multimeric L10(L12)X complex, where L10 forms an elongated spine to which 2 to 4 L12 dimers bind in a sequential fashion. Binds GTP-bound translation factors.

Functionally, forms part of the ribosomal stalk which helps the ribosome interact with GTP-bound translation factors. Is thus essential for accurate translation. This is Large ribosomal subunit protein bL12 from Borreliella burgdorferi (strain ATCC 35210 / DSM 4680 / CIP 102532 / B31) (Borrelia burgdorferi).